We begin with the raw amino-acid sequence, 394 residues long: Subtilisin-like protease CPC735_005570 (394 aa).

The signal sequence occupies residues 1–21; it reads MRAIISVALFLSLSLLSAVNA. Residues 22 to 114 constitute a propeptide that is removed on maturation; the sequence is AEILSAGDTD…IEHDRIANAR (93 aa). One can recognise an Inhibitor I9 domain in the interval 37-110; sequence SYIVVMRDGL…AVKYIEHDRI (74 aa). Positions 123–394 constitute a Peptidase S8 domain; the sequence is GWNLARISHK…RLLLYNGSGR (272 aa). Residues D155 and H186 each act as charge relay system in the active site. N-linked (GlcNAc...) asparagine glycans are attached at residues N216 and N247. S340 (charge relay system) is an active-site residue. Residues N382 and N390 are each glycosylated (N-linked (GlcNAc...) asparagine).

The protein belongs to the peptidase S8 family.

It is found in the secreted. In terms of biological role, secreted subtilisin-like serine protease with keratinolytic activity that contributes to pathogenicity. The chain is Subtilisin-like protease CPC735_005570 from Coccidioides posadasii (strain C735) (Valley fever fungus).